The primary structure comprises 313 residues: Hydroxyacylglutathione hydrolase, mitochondrial (313 aa).

H107, H109, D111, H112, H163, and D187 together coordinate Zn(2+). Residues 196–198 (KFF) and 226–228 (HEY) contribute to the substrate site. H226 contributes to the Zn(2+) binding site. Basic and acidic residues-rich tracts occupy residues 285 to 294 (VQEHAGERDP) and 301 to 313 (IRKEKDHFKVPKD). Positions 285 to 313 (VQEHAGERDPISTMGAIRKEKDHFKVPKD) are disordered. 302-305 (RKEK) is a binding site for substrate.

This sequence belongs to the metallo-beta-lactamase superfamily. Glyoxalase II family. In terms of assembly, monomer. Requires Zn(2+) as cofactor.

It is found in the mitochondrion matrix. Its subcellular location is the cytoplasm. The enzyme catalyses an S-(2-hydroxyacyl)glutathione + H2O = a 2-hydroxy carboxylate + glutathione + H(+). The catalysed reaction is (R)-S-lactoylglutathione + H2O = (R)-lactate + glutathione + H(+). Thiolesterase that catalyzes the hydrolysis of S-D-lactoyl-glutathione to form glutathione and D-lactic acid. This Xenopus tropicalis (Western clawed frog) protein is Hydroxyacylglutathione hydrolase, mitochondrial (hagh).